The chain runs to 956 residues: Bifunctional glutamine synthetase adenylyltransferase/adenylyl-removing enzyme (956 aa).

The adenylyl removase stretch occupies residues 1–450; that stretch reads MENMSEQALP…YFKETVGGQE (450 aa). The interval 456-956 is adenylyl transferase; that stretch reads EQWTAQLWSL…IYEQVLNNGQ (501 aa).

This sequence belongs to the GlnE family. It depends on Mg(2+) as a cofactor.

It catalyses the reaction [glutamine synthetase]-O(4)-(5'-adenylyl)-L-tyrosine + phosphate = [glutamine synthetase]-L-tyrosine + ADP. The catalysed reaction is [glutamine synthetase]-L-tyrosine + ATP = [glutamine synthetase]-O(4)-(5'-adenylyl)-L-tyrosine + diphosphate. In terms of biological role, involved in the regulation of glutamine synthetase GlnA, a key enzyme in the process to assimilate ammonia. When cellular nitrogen levels are high, the C-terminal adenylyl transferase (AT) inactivates GlnA by covalent transfer of an adenylyl group from ATP to specific tyrosine residue of GlnA, thus reducing its activity. Conversely, when nitrogen levels are low, the N-terminal adenylyl removase (AR) activates GlnA by removing the adenylyl group by phosphorolysis, increasing its activity. The regulatory region of GlnE binds the signal transduction protein PII (GlnB) which indicates the nitrogen status of the cell. The polypeptide is Bifunctional glutamine synthetase adenylyltransferase/adenylyl-removing enzyme (Shewanella loihica (strain ATCC BAA-1088 / PV-4)).